A 347-amino-acid chain; its full sequence is MTVPVRGFSLLRGRLGRAPALGRSTAPSVRAPGEPGSAFRGFRSSGVRHEAIIISGTEMAKHIQKEIQRGVESWVSLGNRRPHLSIILVGDNPASHTYVRNKIRAASAVGICSELILKPKDVSQEELLDVTDQLNMDPRVSGILVQLPLPDHVDERTICNGIAPEKDVDGFHIINIGRLCLDQHSLIPATASAVWEIIKRTGIQTFGKNVVVAGRSKNVGMPIAMLLHTDGEHERPGGDATVTIAHRYTPKEQLKIHTQLADIIIVAAGIPKLITSDMVKEGAAVIDVGINYVHDPVTGKTKLVGDVDFEAVKKKAGFITPVPGGVGPMTVAMLLKNTLLAAKKIIY.

Residues 98–102 and 145–147 contribute to the substrate site; these read YVRNK and VQL. NAD(+)-binding positions include 214-216 and Arg247; that span reads GRS. 323 to 327 is a substrate binding site; the sequence is PGGVG.

It belongs to the tetrahydrofolate dehydrogenase/cyclohydrolase family. Mg(2+) serves as cofactor. Isoform 1, isoform 4 and isoform 5 are expressed in brain and placenta.

Its subcellular location is the mitochondrion inner membrane. The catalysed reaction is (6R)-5,10-methylene-5,6,7,8-tetrahydrofolate + NAD(+) = (6R)-5,10-methenyltetrahydrofolate + NADH. It catalyses the reaction (6R)-5,10-methenyltetrahydrofolate + H2O = (6R)-10-formyltetrahydrofolate + H(+). It carries out the reaction (6R)-5,10-methylene-5,6,7,8-tetrahydrofolate + NADP(+) = (6R)-5,10-methenyltetrahydrofolate + NADPH. It functions in the pathway one-carbon metabolism; tetrahydrofolate interconversion. Its function is as follows. Bifunctional mitochondrial folate-interconverting enzyme that has both NAD/NADP-dependent methylenetetrahydrofolate dehydrogenase and methenyltetrahydrofolate cyclohydrolase activities. The sequence is that of Bifunctional methylenetetrahydrofolate dehydrogenase/cyclohydrolase 2, mitochondrial from Homo sapiens (Human).